We begin with the raw amino-acid sequence, 304 residues long: ATP phosphoribosyltransferase (304 aa).

The protein belongs to the ATP phosphoribosyltransferase family. Long subfamily. Mg(2+) is required as a cofactor.

It is found in the cytoplasm. It catalyses the reaction 1-(5-phospho-beta-D-ribosyl)-ATP + diphosphate = 5-phospho-alpha-D-ribose 1-diphosphate + ATP. It functions in the pathway amino-acid biosynthesis; L-histidine biosynthesis; L-histidine from 5-phospho-alpha-D-ribose 1-diphosphate: step 1/9. Feedback inhibited by histidine. In terms of biological role, catalyzes the condensation of ATP and 5-phosphoribose 1-diphosphate to form N'-(5'-phosphoribosyl)-ATP (PR-ATP). Has a crucial role in the pathway because the rate of histidine biosynthesis seems to be controlled primarily by regulation of HisG enzymatic activity. This chain is ATP phosphoribosyltransferase, found in Xanthomonas euvesicatoria pv. vesicatoria (strain 85-10) (Xanthomonas campestris pv. vesicatoria).